A 493-amino-acid chain; its full sequence is 3-octaprenyl-4-hydroxybenzoate carboxy-lyase (493 aa).

Asn172 is a binding site for Mn(2+). Prenylated FMN-binding positions include 175–177, 189–191, and 194–195; these read IYR, RWL, and RG. Glu238 contacts Mn(2+). Asp287 functions as the Proton donor in the catalytic mechanism.

This sequence belongs to the UbiD family. In terms of assembly, homohexamer. The cofactor is prenylated FMN. It depends on Mn(2+) as a cofactor.

The protein localises to the cell membrane. It carries out the reaction a 4-hydroxy-3-(all-trans-polyprenyl)benzoate + H(+) = a 2-(all-trans-polyprenyl)phenol + CO2. It participates in cofactor biosynthesis; ubiquinone biosynthesis. Its function is as follows. Catalyzes the decarboxylation of 3-octaprenyl-4-hydroxy benzoate to 2-octaprenylphenol, an intermediate step in ubiquinone biosynthesis. This Shewanella putrefaciens (strain CN-32 / ATCC BAA-453) protein is 3-octaprenyl-4-hydroxybenzoate carboxy-lyase.